The chain runs to 289 residues: tRNA-cytidine(32) 2-sulfurtransferase (289 aa).

The PP-loop motif signature appears at Ser39 to Ser44. The [4Fe-4S] cluster site is built by Cys114, Cys117, and Cys205.

This sequence belongs to the TtcA family. Homodimer. The cofactor is Mg(2+). It depends on [4Fe-4S] cluster as a cofactor.

It is found in the cytoplasm. The enzyme catalyses cytidine(32) in tRNA + S-sulfanyl-L-cysteinyl-[cysteine desulfurase] + AH2 + ATP = 2-thiocytidine(32) in tRNA + L-cysteinyl-[cysteine desulfurase] + A + AMP + diphosphate + H(+). The protein operates within tRNA modification. Its function is as follows. Catalyzes the ATP-dependent 2-thiolation of cytidine in position 32 of tRNA, to form 2-thiocytidine (s(2)C32). The sulfur atoms are provided by the cysteine/cysteine desulfurase (IscS) system. In Deinococcus geothermalis (strain DSM 11300 / CIP 105573 / AG-3a), this protein is tRNA-cytidine(32) 2-sulfurtransferase.